Here is a 352-residue protein sequence, read N- to C-terminus: Extracellular minor metalloprotease (352 aa).

2 disordered regions span residues Gly-41 to Arg-86 and Thr-144 to His-164. The span at Pro-48–Glu-57 shows a compositional bias: basic and acidic residues. Low complexity-rich tracts occupy residues Ala-71–Arg-85 and Thr-144–Thr-156. His-160 serves as a coordination point for Zn(2+). Glu-161 is an active-site residue. 2 residues coordinate Zn(2+): His-164 and Glu-184. Residue His-262 is the Proton donor of the active site. The segment at Thr-303–Gly-325 is disordered. Residues Pro-304 to Gly-325 show a composition bias toward basic and acidic residues.

It belongs to the peptidase M4 family. Zn(2+) is required as a cofactor.

The protein localises to the secreted. This is Extracellular minor metalloprotease (smp) from Serratia marcescens (strain ATCC 21074 / E-15).